A 272-amino-acid polypeptide reads, in one-letter code: Methylesterase 8 (272 aa).

The active-site Acyl-ester intermediate is the Ser102. Residues Asp222 and His250 each act as charge relay system in the active site.

This sequence belongs to the AB hydrolase superfamily. Methylesterase family.

Its function is as follows. Methylesterase shown to have carboxylesterase activity in vitro. The polypeptide is Methylesterase 8 (Arabidopsis thaliana (Mouse-ear cress)).